The sequence spans 150 residues: Deoxyuridine 5'-triphosphate nucleotidohydrolase (150 aa).

Substrate is bound by residues 69–71 (RSG), asparagine 82, 86–88 (LID), and methionine 96.

Belongs to the dUTPase family. The cofactor is Mg(2+).

The catalysed reaction is dUTP + H2O = dUMP + diphosphate + H(+). It functions in the pathway pyrimidine metabolism; dUMP biosynthesis; dUMP from dCTP (dUTP route): step 2/2. Its function is as follows. This enzyme is involved in nucleotide metabolism: it produces dUMP, the immediate precursor of thymidine nucleotides and it decreases the intracellular concentration of dUTP so that uracil cannot be incorporated into DNA. The polypeptide is Deoxyuridine 5'-triphosphate nucleotidohydrolase (Acinetobacter baumannii (strain AB307-0294)).